Here is a 140-residue protein sequence, read N- to C-terminus: Nucleoside diphosphate kinase (140 aa).

Residues lysine 11, phenylalanine 59, arginine 87, threonine 93, arginine 104, and asparagine 114 each coordinate ATP. Histidine 117 functions as the Pros-phosphohistidine intermediate in the catalytic mechanism.

The protein belongs to the NDK family. As to quaternary structure, homotetramer. Requires Mg(2+) as cofactor.

The protein resides in the cytoplasm. It catalyses the reaction a 2'-deoxyribonucleoside 5'-diphosphate + ATP = a 2'-deoxyribonucleoside 5'-triphosphate + ADP. The enzyme catalyses a ribonucleoside 5'-diphosphate + ATP = a ribonucleoside 5'-triphosphate + ADP. Its function is as follows. Major role in the synthesis of nucleoside triphosphates other than ATP. The ATP gamma phosphate is transferred to the NDP beta phosphate via a ping-pong mechanism, using a phosphorylated active-site intermediate. In Rhodopseudomonas palustris (strain ATCC BAA-98 / CGA009), this protein is Nucleoside diphosphate kinase.